The following is a 124-amino-acid chain: UPF0102 protein Noc_0355 (124 aa).

Belongs to the UPF0102 family.

The polypeptide is UPF0102 protein Noc_0355 (Nitrosococcus oceani (strain ATCC 19707 / BCRC 17464 / JCM 30415 / NCIMB 11848 / C-107)).